A 518-amino-acid chain; its full sequence is Equilibrative nucleoside transporter 4 (518 aa).

Over residues 1 to 10 (MGSKGAERRK) the composition is skewed to basic and acidic residues. The segment at 1–21 (MGSKGAERRKQATPGQTPEGN) is disordered. Topologically, residues 1 to 66 (MGSKGAERRK…EEAVPDDRYH (66 aa)) are extracellular. The chain crosses the membrane as a helical span at residues 67–87 (GIYFAMLLAGVGFLLPYNSFI). Topologically, residues 88–99 (TDVDYLHHKFEG) are cytoplasmic. Residues 100-120 (TSIVFDMGLTYILVALVAVIL) traverse the membrane as a helical segment. The Extracellular segment spans residues 121 to 133 (NNVLVEMLSLHTR). The helical transmembrane segment at 134–154 (ITVGYLFALGPLLFVTIFDVW) threads the bilayer. Topologically, residues 155–157 (LER) are cytoplasmic. A helical transmembrane segment spans residues 158 to 178 (FTIKQAYVINLMSMGTVAFGC). Topologically, residues 179 to 198 (TVQQSSFYGYMGMLPKRYTQ) are extracellular. The chain crosses the membrane as a helical span at residues 199-218 (GVMTGESTAGVIISLSRIFT). The Cytoplasmic segment spans residues 219–229 (KLLIKDERKNT). The helical transmembrane segment at 230-250 (IIFFVISICMVLVCFILHLLV) threads the bilayer. Residues 251–342 (RRTRFVQYYT…MILHRYVVAR (92 aa)) lie on the Extracellular side of the membrane. Residues 343–363 (VIWTYMLSIAVTYFITLCLFP) traverse the membrane as a helical segment. The Cytoplasmic segment spans residues 364-376 (GLESEIKNATLGE). Residues 377 to 397 (WLPILIMAIFNISDFVGKILA) traverse the membrane as a helical segment. Residues 398–407 (AVPYEWNGTR) are Extracellular-facing. A helical membrane pass occupies residues 408–428 (LLFFSCVRVVFIPLFIMCVYP). Residues 429–439 (AQMPMFSHPAW) are Cytoplasmic-facing. A helical membrane pass occupies residues 440–460 (PCIFSLFMGITNGYFGSVPMI). Residues 461 to 476 (HAAGKVAPEQRELAGN) lie on the Extracellular side of the membrane. A helical transmembrane segment spans residues 477–497 (IMTVSYMSGLMLGSVVAYAAY). Residues 498–518 (SFTASGSSFHSQTGYNFTQGY) are Cytoplasmic-facing.

This sequence belongs to the SLC29A/ENT transporter (TC 2.A.57) family.

It is found in the membrane. Functionally, functions as a polyspecific organic cation transporter, efficiently transporting many organic cations such as monoamine neurotransmitters 1-methyl-4-phenylpyridinium and biogenic amines including serotonin, dopamine, norepinephrine and epinephrine. May play a role in regulating central nervous system homeostasis of monoamine neurotransmitters. May be involved in luminal transport of organic cations in the kidney and seems to use luminal proton gradient to drive organic cation reabsorption. Does not seem to transport nucleoside and nucleoside analogs such as uridine, cytidine, thymidine, adenosine, inosine, guanosine, and azidothymidine. In Danio rerio (Zebrafish), this protein is Equilibrative nucleoside transporter 4 (slc29a4).